Here is a 2495-residue protein sequence, read N- to C-terminus: Non-reducing polyketide synthase adrD (2495 aa).

The N-terminal acylcarrier protein transacylase domain (SAT) stretch occupies residues valine 14–glutamine 252. A Ketosynthase family 3 (KS3) domain is found at valine 386–glutamine 807. Catalysis depends on for beta-ketoacyl synthase activity residues cysteine 551, histidine 686, and histidine 725. Residues leucine 913 to alanine 1222 are malonyl-CoA:ACP transacylase (MAT) domain. The active-site For acyl/malonyl transferase activity is the serine 1000. The tract at residues lysine 1294–glutamine 1422 is N-terminal hotdog fold. In terms of domain architecture, PKS/mFAS DH spans lysine 1294 to serine 1601. Residues glutamate 1295–leucine 1600 are product template (PT) domain. Catalysis depends on histidine 1325, which acts as the Proton acceptor; for dehydratase activity. The C-terminal hotdog fold stretch occupies residues glutamate 1450 to serine 1601. The active-site Proton donor; for dehydratase activity is the aspartate 1508. The Carrier domain maps to serine 1651 to alanine 1725. Serine 1685 carries the post-translational modification O-(pantetheine 4'-phosphoryl)serine. The methyltransferase (CMeT) domain stretch occupies residues glutamine 1887–asparagine 2120. The thioesterase (TE) domain stretch occupies residues tyrosine 2150–tyrosine 2495. Active-site for thioesterase activity residues include serine 2273 and aspartate 2432.

It carries out the reaction 3 malonyl-CoA + acetyl-CoA + 2 S-adenosyl-L-methionine = 3,5-dimethylorsellinate + 2 S-adenosyl-L-homocysteine + 3 CO2 + 4 CoA. The protein operates within secondary metabolite biosynthesis; terpenoid biosynthesis. Its function is as follows. Non-reducing polyketide synthase; part of the gene cluster that mediates the biosynthesis of andrastins, meroterpenoid compounds that exhibit inhibitory activity against ras farnesyltransferase, suggesting that they could be promising leads for antitumor agents. The first step of the pathway is the synthesis of 3,5-dimethylorsellinic acid (DMOA) by the polyketide synthase adrD via condensation of one acetyl-CoA starter unit with 3 malonyl-CoA units and 2 methylations. DMAO is then converted to farnesyl-DMAO by the prenyltransferase adrG. The methyltransferase adrK catalyzes the methylation of the carboxyl group of farnesyl-DMAO to farnesyl-DMAO methyl ester which is further converted to epoxyfarnesyl-DMAO methyl ester by the FAD-dependent monooxygenase adrH. The terpene cyclase adrI then catalyzes the carbon skeletal rearrangement to generate the andrastin E, the first compound in the pathway having the andrastin scaffold, with the tetracyclic ring system. The post-cyclization tailoring enzymes adrF, adrE, adrJ, and adrA, are involved in the conversion of andrastin E into andrastin A. The short chain dehydrogenase adrF is responsible for the oxidation of the C-3 a hydroxyl group of andrastin E to yield the corresponding ketone, andrastin D. The ketoreductase adrE stereoselectively reduces the carbonyl moiety to reverse the stereochemistry of the C-3 position to yield andrastin F. The acetyltransferase adrJ is the acetyltransferase that attaches the acetyl group to the C-3 hydroxyl group of andrastin F to yield andrastin C. Finally, the cytochrome P450 monooxygenase adrA catalyzes two sequential oxidation reactions of the C-23 methyl group, to generate the corresponding alcohol andrastin B, and aldehyde andrastin A. The polypeptide is Non-reducing polyketide synthase adrD (Penicillium roqueforti).